The primary structure comprises 42 residues: Photosystem I reaction center subunit IX (42 aa).

The chain crosses the membrane as a helical span at residues 7–27; that stretch reads YLSTAPVLAAVWFTVLAGILI.

The protein belongs to the PsaJ family.

The protein resides in the plastid. It localises to the chloroplast thylakoid membrane. Its function is as follows. May help in the organization of the PsaE and PsaF subunits. This is Photosystem I reaction center subunit IX from Ostreococcus tauri.